A 234-amino-acid chain; its full sequence is Segregation and condensation protein A (234 aa).

Belongs to the ScpA family. Component of a cohesin-like complex composed of ScpA, ScpB and the Smc homodimer, in which ScpA and ScpB bind to the head domain of Smc. The presence of the three proteins is required for the association of the complex with DNA.

The protein resides in the cytoplasm. Participates in chromosomal partition during cell division. May act via the formation of a condensin-like complex containing Smc and ScpB that pull DNA away from mid-cell into both cell halves. This Streptococcus pyogenes serotype M18 (strain MGAS8232) protein is Segregation and condensation protein A.